A 1235-amino-acid chain; its full sequence is Chitin synthase 4 (1235 aa).

Pro residues predominate over residues 1 to 11 (MSLPRRPGPSP). Positions 1-203 (MSLPRRPGPS…ASKGKREKSG (203 aa)) are disordered. Over 1–212 (MSLPRRPGPS…GGLPTPSFWN (212 aa)) the chain is Cytoplasmic. Residues 19-28 (YRQSGSRRSR) are compositionally biased toward basic residues. The segment covering 46–59 (PSQQQRVPSISSFP) has biased composition (polar residues). The span at 94–107 (IRPERNRIGKDHPN) shows a compositional bias: basic and acidic residues. Residues 116–125 (NMNTLPSSTG) show a composition bias toward polar residues. Residues 169–187 (ETEKSGDERRRRRKSDTTK) are compositionally biased toward basic and acidic residues. Basic residues predominate over residues 188-199 (HGKIVKASKGKR). Residues 213-233 (IYCGFVTFWCPGFVLKCFGMP) form a helical membrane-spanning segment. Residues 234 to 244 (EMAQQRAWREK) lie on the Extracellular side of the membrane. A helical transmembrane segment spans residues 245-265 (MGLISIILLIMGFVGFITFGF). At 266–514 (TQVVCGKPPL…ASKVVLYVSL (249 aa)) the chain is on the cytoplasmic side. A helical transmembrane segment spans residues 515–535 (VLILAVVLARFVLALIFQWFI). The Extracellular segment spans residues 536-1065 (SKTYAAAKTS…SMQFIVGIEL (530 aa)). A disordered region spans residues 545-592 (SQTSDQRKRNRQIEDWTEDIYRAPPRLPGEVGSSVAGSSDRQSKRSSA). Residues 549 to 558 (DQRKRNRQIE) are compositionally biased toward basic and acidic residues. N639 carries an N-linked (GlcNAc...) asparagine glycan. A disordered region spans residues 645–670 (FLKSDAYGSSSSPADGPGPAGFIHEA). Residues 648–665 (SDAYGSSSSPADGPGPAG) are compositionally biased toward low complexity. Residue N1034 is glycosylated (N-linked (GlcNAc...) asparagine). Residues 1066-1086 (IGTLVLPAAIAFTFYVVIISI) form a helical membrane-spanning segment. At 1087–1092 (INSPPQ) the chain is on the cytoplasmic side. A helical membrane pass occupies residues 1093 to 1113 (IIPLVLLGLILGLPAILVVVT). The Extracellular segment spans residues 1114–1116 (AHS). Residues 1117–1137 (WSYIIWMFIYLLSLPVWNFVL) form a helical membrane-spanning segment. Residues 1138 to 1235 (PTYAFWKFDD…RHFDDYFSDA (98 aa)) are Cytoplasmic-facing. A disordered region spans residues 1201–1235 (RDNVISGVGGSNGWGSSQPRGHEQGRHFDDYFSDA). Positions 1220–1235 (RGHEQGRHFDDYFSDA) are enriched in basic and acidic residues.

It belongs to the chitin synthase family. Class IV subfamily.

The protein resides in the cell membrane. The enzyme catalyses [(1-&gt;4)-N-acetyl-beta-D-glucosaminyl](n) + UDP-N-acetyl-alpha-D-glucosamine = [(1-&gt;4)-N-acetyl-beta-D-glucosaminyl](n+1) + UDP + H(+). Functionally, polymerizes chitin, a structural polymer of the cell wall and septum, by transferring the sugar moiety of UDP-GlcNAc to the non-reducing end of the growing chitin polymer. The chain is Chitin synthase 4 (chs-4) from Neurospora crassa (strain ATCC 24698 / 74-OR23-1A / CBS 708.71 / DSM 1257 / FGSC 987).